The primary structure comprises 153 residues: MTQLPYAVDAETPLNPAELNVLRAQYEKEGEMVGVQTKFNYAWGLVKSNVRADQHLGVMLLSEIFRTSPERRRECLYYLALGNYKLGNYAQARKYNDALLENEPANLQAANLRALIDDKVTKEGLMGVAIISGVAVAAGVIGGVLLRNLGRKR.

The Cytoplasmic portion of the chain corresponds to 1-124 (MTQLPYAVDA…LIDDKVTKEG (124 aa)). A TPR repeat occupies 73–106 (RECLYYLALGNYKLGNYAQARKYNDALLENEPAN). A helical membrane pass occupies residues 125–145 (LMGVAIISGVAVAAGVIGGVL). The Mitochondrial intermembrane segment spans residues 146–153 (LRNLGRKR).

This sequence belongs to the FIS1 family.

It localises to the mitochondrion outer membrane. Has a role in mitochondrial fission. Has a role in outer membrane fission but not matrix separation. In Neurospora crassa (strain ATCC 24698 / 74-OR23-1A / CBS 708.71 / DSM 1257 / FGSC 987), this protein is Mitochondrial fission 1 protein (mtp-2).